The primary structure comprises 222 residues: Superoxide dismutase [Mn], mitochondrial (222 aa).

A mitochondrion-targeting transit peptide spans 1–24 (MLCRAACSTSRKLVPALGSLGSRQ). Histidine 50 is a binding site for Mn(2+). Tyrosine 58 is subject to 3'-nitrotyrosine. 2 positions are modified to N6-acetyllysine; alternate: lysine 68 and lysine 75. Lysine 68 and lysine 75 each carry N6-succinyllysine; alternate. Residue histidine 98 coordinates Mn(2+). At lysine 114 the chain carries N6-acetyllysine. Residues lysine 122 and lysine 130 each carry the N6-acetyllysine; alternate modification. N6-succinyllysine; alternate is present on residues lysine 122 and lysine 130. 2 residues coordinate Mn(2+): aspartate 183 and histidine 187. Lysine 202 carries the post-translational modification N6-acetyllysine.

It belongs to the iron/manganese superoxide dismutase family. In terms of assembly, homotetramer. Mn(2+) serves as cofactor. Nitrated under oxidative stress. Nitration coupled with oxidation inhibits the catalytic activity. In terms of processing, acetylation at Lys-122 decreases enzymatic activity. Deacetylated by SIRT3 upon exposure to ionizing radiations or after long fasting. Post-translationally, polyubiquitinated; leading to proteasomal degradation. Deubiquitinated by USP36 which increases protein stability.

The protein localises to the mitochondrion matrix. It catalyses the reaction 2 superoxide + 2 H(+) = H2O2 + O2. Destroys superoxide anion radicals which are normally produced within the cells and which are toxic to biological systems. In Equus caballus (Horse), this protein is Superoxide dismutase [Mn], mitochondrial (SOD2).